The sequence spans 225 residues: Cyclin-dependent kinase inhibitor 3 (225 aa).

2 disordered regions span residues 47-94 and 130-169; these read AAAA…QRRR and ERKS…PLSP. Basic residues predominate over residues 55 to 67; the sequence is CRRRHRRGGRRGC. Residues 71-82 are compositionally biased toward low complexity; the sequence is GAGSARACGARS. The segment covering 143–153 has biased composition (basic and acidic residues); it reads VAAEHAGEHKH.

It belongs to the CDI family. ICK/KRP subfamily.

The polypeptide is Cyclin-dependent kinase inhibitor 3 (KRP3) (Oryza sativa subsp. japonica (Rice)).